Consider the following 1171-residue polypeptide: MASSISRNGGFCGALQRAPPPMPPGLARRLSSRECYGVGKVKVMLRVSDRAPDKDSPLDPEFMALDKKKRQVTLTDPRNVCPPPQAAQERGPMVAAPKMFAFDNLFTAEDKQSDVCASALSEVIPAVLEGSDGCLLAMGYPSTGQPHTVLGGDVATGAGAGAATGTGTGTGSVAACSLGAAPCAIAWLYKGIQERRQKSGARFSVRVSAVGVSATKPDALSTDLLISHAAESDDSPGIYLRDDFLGGPTELRAPTAERAALFLDSALAGRLKSSGSTSTPAGGGPAPLESALIFTLHVYQYSLSRKGGVAGGRSRLHIIDLGGCANRSGGLPLSGIGNILLAILSGQRHPPHKDHPLTPLLKDCLAPITCHVAIVAHVLHEQSYQDALSTIQIASRIHRLRRRKHRVPMPLAVGLAQGLSGGGGSSAGSGADPSSSEISADTVIYMGPNDDATDGEHPPVYLPSLSAGDNRAIMSKALKGSGLEKPPTQMKAGLSSPMMMKKAMAAAGEKVKKLPGNSPMGSLKRQAAAGACSSPLVPHEQQQQQQQIAHGSPIPIPRHMVSKGSNVPSPKGSPLRRAHAGAHPGAALEQLEAGMRKITEEQWIDGPRVSRAKVAEARHLMREVNHVKQCETWVDGPKSLSCRSLTAGNLPAAGAQTQGYGFMDSHKKTMIRQWVETQTSQVFQSPATVSASNSPTALHWKLSQLKQKSLDLPERPAFPPEQQSMDLPQQCFESQPLLGQDMSLPPDGDEDQDSGPSEVPPALPLFDDPLGSRDISHDSLHRMLSRHVSREQLHEADLVASRASSSHHQHQHHRPSSQRSIDCGLQVTEEEIARTMAREQEHSMHPLSALSHCDNLSFVSSFNMACESFSECGERARHQFDQLARLHEIFTSQLAMAEVTPSAALFRTDVSSVFSEPVFRFNVGQSSVCSEPAYRLTPSPPKQPSHSPSQGSLPSLNGIMEIAGMDDYALLRQPDGASDPSLPKSEKRFAPQHDDICELDEKAMAAAVGKRNSLEDAQHKLNEITNILPLAAQSRLPLLPLNTSSEAYDSGHDSNSTPRTSKHSGISRRAESGYHSVATVRDSDESSFASGMSKGQRHRITISGGGGGGCGAGGGGSATGNYQRHSHGVGGHKKHRHRHEGNGGGNKGLCNWLLTPFSCTYPETEGEISDF.

Residues 1–24 are disordered; sequence MASSISRNGGFCGALQRAPPPMPP. A Kinesin motor domain is found at 40–400; sequence KVKVMLRVSD…IQIASRIHRL (361 aa). Disordered regions lie at residues 737-774, 798-820, 932-955, 1043-1099, and 1124-1143; these read LLGQ…GSRD, LVAS…SQRS, PAYR…SLPS, TSSE…QRHR, and RHSH…EGNG. Positions 805–816 are enriched in basic residues; the sequence is SSHHQHQHHRPS. Over residues 1043 to 1059 the composition is skewed to polar residues; it reads TSSEAYDSGHDSNSTPR. Residues 1124–1139 show a composition bias toward basic residues; the sequence is RHSHGVGGHKKHRHRH.

The protein belongs to the TRAFAC class myosin-kinesin ATPase superfamily. Kinesin family. KIF26 subfamily.

The protein localises to the cytoplasm. The protein resides in the cytoskeleton. The sequence is that of Kinesin-like protein GA13060 from Drosophila pseudoobscura pseudoobscura (Fruit fly).